The sequence spans 178 residues: uncharacterized protein (178 aa).

The next 4 membrane-spanning stretches (helical) occupy residues 3 to 23 (IPII…FISI), 56 to 76 (IFLM…NLIF), 101 to 121 (LILP…VAGF), and 150 to 170 (LSLI…YITP).

The protein to M.jannaschii MJ0706 and Synechocystis PCC 6803 slr1478.

It localises to the cell membrane. This is an uncharacterized protein from Methanocaldococcus jannaschii (strain ATCC 43067 / DSM 2661 / JAL-1 / JCM 10045 / NBRC 100440) (Methanococcus jannaschii).